Consider the following 307-residue polypeptide: Branched-chain-amino-acid aminotransferase (307 aa).

Lys-160 carries the N6-(pyridoxal phosphate)lysine modification.

It belongs to the class-IV pyridoxal-phosphate-dependent aminotransferase family. The cofactor is pyridoxal 5'-phosphate.

It catalyses the reaction L-leucine + 2-oxoglutarate = 4-methyl-2-oxopentanoate + L-glutamate. The catalysed reaction is L-isoleucine + 2-oxoglutarate = (S)-3-methyl-2-oxopentanoate + L-glutamate. It carries out the reaction L-valine + 2-oxoglutarate = 3-methyl-2-oxobutanoate + L-glutamate. The protein operates within amino-acid biosynthesis; L-isoleucine biosynthesis; L-isoleucine from 2-oxobutanoate: step 4/4. Its pathway is amino-acid biosynthesis; L-leucine biosynthesis; L-leucine from 3-methyl-2-oxobutanoate: step 4/4. It participates in amino-acid biosynthesis; L-valine biosynthesis; L-valine from pyruvate: step 4/4. Its function is as follows. Acts on leucine, isoleucine and valine. The protein is Branched-chain-amino-acid aminotransferase (ilvE) of Pseudomonas aeruginosa (strain ATCC 15692 / DSM 22644 / CIP 104116 / JCM 14847 / LMG 12228 / 1C / PRS 101 / PAO1).